A 196-amino-acid polypeptide reads, in one-letter code: uncharacterized protein (196 aa).

This is an uncharacterized protein from Caenorhabditis elegans.